We begin with the raw amino-acid sequence, 192 residues long: Ubiquitin-conjugating enzyme E2 1 (192 aa).

The tract at residues 1–28 (MTTPSRRRLMRDFKKLQEDPPAGVSGAP) is disordered. Residues 4–150 (PSRRRLMRDF…VQQIVEQSWL (147 aa)) enclose the UBC core domain. Cysteine 88 acts as the Glycyl thioester intermediate in catalysis. Residues 171-192 (AAPGANDADDDRMDEGASGSNA) are disordered.

Belongs to the ubiquitin-conjugating enzyme family. Interacts with ubr-1 and rfp-1. Interacts with ubc-13.

It catalyses the reaction S-ubiquitinyl-[E1 ubiquitin-activating enzyme]-L-cysteine + [E2 ubiquitin-conjugating enzyme]-L-cysteine = [E1 ubiquitin-activating enzyme]-L-cysteine + S-ubiquitinyl-[E2 ubiquitin-conjugating enzyme]-L-cysteine.. It functions in the pathway protein modification; protein ubiquitination. Catalyzes the covalent attachment of ubiquitin to other proteins. This chain is Ubiquitin-conjugating enzyme E2 1 (ubc-1), found in Caenorhabditis elegans.